The primary structure comprises 202 residues: 3-isopropylmalate dehydratase small subunit (202 aa).

This sequence belongs to the LeuD family. LeuD type 1 subfamily. In terms of assembly, heterodimer of LeuC and LeuD.

The catalysed reaction is (2R,3S)-3-isopropylmalate = (2S)-2-isopropylmalate. Its pathway is amino-acid biosynthesis; L-leucine biosynthesis; L-leucine from 3-methyl-2-oxobutanoate: step 2/4. Catalyzes the isomerization between 2-isopropylmalate and 3-isopropylmalate, via the formation of 2-isopropylmaleate. This chain is 3-isopropylmalate dehydratase small subunit, found in Caulobacter vibrioides (strain ATCC 19089 / CIP 103742 / CB 15) (Caulobacter crescentus).